A 305-amino-acid chain; its full sequence is tRNA dimethylallyltransferase (305 aa).

14-21 is a binding site for ATP; it reads GPTASGKS. 16–21 contributes to the substrate binding site; that stretch reads TASGKS. The interaction with substrate tRNA stretch occupies residues 39 to 42; the sequence is DSMQ.

The protein belongs to the IPP transferase family. Monomer. The cofactor is Mg(2+).

It catalyses the reaction adenosine(37) in tRNA + dimethylallyl diphosphate = N(6)-dimethylallyladenosine(37) in tRNA + diphosphate. Its function is as follows. Catalyzes the transfer of a dimethylallyl group onto the adenine at position 37 in tRNAs that read codons beginning with uridine, leading to the formation of N6-(dimethylallyl)adenosine (i(6)A). This chain is tRNA dimethylallyltransferase, found in Bradyrhizobium sp. (strain BTAi1 / ATCC BAA-1182).